A 944-amino-acid chain; its full sequence is Thyroid peroxidase (944 aa).

An N-terminal signal peptide occupies residues 1-30; it reads MVGLVPAGSAWGGRALAVLGVTLLVALARG. The Extracellular segment spans residues 31–858; the sequence is LLPFFLGGRD…SGRLPKASLV (828 aa). N141 carries N-linked (GlcNAc...) asparagine glycosylation. Residues C154 and C170 are joined by a disulfide bond. D250 lines the heme b pocket. The active-site Proton acceptor is H251. Residue D252 participates in Ca(2+) binding. 2 cysteine pairs are disulfide-bonded: C271–C281 and C275–C295. N-linked (GlcNAc...) asparagine glycosylation is present at N316. Positions 330, 332, 334, and 336 each coordinate Ca(2+). An N-linked (GlcNAc...) asparagine glycan is attached at N351. Heme b-binding residues include E408 and H503. 7 disulfides stabilise this stretch: C606/C663, C704/C729, C750/C790, C776/C802, C808/C822, C816/C831, and C833/C846. Residue N623 is glycosylated (N-linked (GlcNAc...) asparagine). The region spanning 748 to 804 is the Sushi domain; sequence DACGLPDSLDNGDVVLCGEAGRRVLVFSCRHGFKLQGPEQVACSPRGGAVRAPVCRD. The region spanning 804–847 is the EGF-like; calcium-binding domain; the sequence is DINECEDASHPPCHGSARCRNTKGGFRCECTDPAVLGEDGTTCV. A helical transmembrane segment spans residues 859 to 879; sequence SIALGIVLVVGLAGLTWTLVC. The Cytoplasmic portion of the chain corresponds to 880–944; that stretch reads RWAHAGRKAS…RSHVAQGSPA (65 aa). The disordered stretch occupies residues 895 to 944; that stretch reads LGGRGAPPPGRGAGQDGASGSLVPPLGPQGRTRAVDPTSSRSHVAQGSPA. A compositionally biased stretch (polar residues) spans 931-944; that stretch reads PTSSRSHVAQGSPA.

This sequence belongs to the peroxidase family. XPO subfamily. As to quaternary structure, interacts with DUOX1, DUOX2 and CYBA. Requires Ca(2+) as cofactor. The cofactor is heme b. Post-translationally, heme is covalently bound through a H(2)O(2)-dependent autocatalytic process. Heme insertion is important for the delivery of protein at the cell surface. Cleaved in its N-terminal part.

The protein resides in the membrane. It catalyses the reaction 2 iodide + H2O2 + 2 H(+) = diiodine + 2 H2O. The catalysed reaction is [thyroglobulin]-L-tyrosine + iodide + H2O2 + H(+) = [thyroglobulin]-3-iodo-L-tyrosine + 2 H2O. It carries out the reaction [thyroglobulin]-3-iodo-L-tyrosine + iodide + H2O2 + H(+) = [thyroglobulin]-3,5-diiodo-L-tyrosine + 2 H2O. The enzyme catalyses 2 [thyroglobulin]-3,5-diiodo-L-tyrosine + H2O2 = [thyroglobulin]-L-thyroxine + [thyroglobulin]-dehydroalanine + 2 H2O. It catalyses the reaction [thyroglobulin]-3-iodo-L-tyrosine + [thyroglobulin]-3,5-diiodo-L-tyrosine + H2O2 = [thyroglobulin]-3,3',5-triiodo-L-thyronine + [thyroglobulin]-dehydroalanine + 2 H2O. Its pathway is hormone biosynthesis; thyroid hormone biosynthesis. Iodination and coupling of the hormonogenic tyrosines in thyroglobulin to yield the thyroid hormones T(3) and T(4). This chain is Thyroid peroxidase (TPO), found in Canis lupus familiaris (Dog).